The sequence spans 514 residues: 2,3-bisphosphoglycerate-independent phosphoglycerate mutase (514 aa).

Residues Asp-14 and Ser-64 each contribute to the Mn(2+) site. The active-site Phosphoserine intermediate is Ser-64. Substrate contacts are provided by residues His-125, 155–156 (RD), Arg-187, Arg-193, 263–266 (RADR), and Lys-336. Mn(2+) is bound by residues Asp-403, His-407, Asp-444, His-445, and His-463.

It belongs to the BPG-independent phosphoglycerate mutase family. As to quaternary structure, monomer. It depends on Mn(2+) as a cofactor.

The enzyme catalyses (2R)-2-phosphoglycerate = (2R)-3-phosphoglycerate. The protein operates within carbohydrate degradation; glycolysis; pyruvate from D-glyceraldehyde 3-phosphate: step 3/5. Functionally, catalyzes the interconversion of 2-phosphoglycerate and 3-phosphoglycerate. The protein is 2,3-bisphosphoglycerate-independent phosphoglycerate mutase of Shewanella halifaxensis (strain HAW-EB4).